The following is a 325-amino-acid chain: Glyoxylate/hydroxypyruvate reductase B (325 aa).

Catalysis depends on residues R237 and E266. H285 functions as the Proton donor in the catalytic mechanism.

Belongs to the D-isomer specific 2-hydroxyacid dehydrogenase family. GhrB subfamily. As to quaternary structure, homodimer.

Its subcellular location is the cytoplasm. It carries out the reaction glycolate + NADP(+) = glyoxylate + NADPH + H(+). The catalysed reaction is (R)-glycerate + NAD(+) = 3-hydroxypyruvate + NADH + H(+). The enzyme catalyses (R)-glycerate + NADP(+) = 3-hydroxypyruvate + NADPH + H(+). Catalyzes the NADPH-dependent reduction of glyoxylate and hydroxypyruvate into glycolate and glycerate, respectively. In Serratia proteamaculans (strain 568), this protein is Glyoxylate/hydroxypyruvate reductase B.